The chain runs to 390 residues: Exodeoxyribonuclease 7 large subunit (390 aa).

This sequence belongs to the XseA family. As to quaternary structure, heterooligomer composed of large and small subunits.

The protein resides in the cytoplasm. It carries out the reaction Exonucleolytic cleavage in either 5'- to 3'- or 3'- to 5'-direction to yield nucleoside 5'-phosphates.. Functionally, bidirectionally degrades single-stranded DNA into large acid-insoluble oligonucleotides, which are then degraded further into small acid-soluble oligonucleotides. The chain is Exodeoxyribonuclease 7 large subunit from Synechococcus sp. (strain CC9311).